The primary structure comprises 231 residues: Orotidine 5'-phosphate decarboxylase (231 aa).

Residues D11, K33, 60-69 (DLKFHDIPNT), T119, R180, Q189, G209, and R210 contribute to the substrate site. Residue K62 is the Proton donor of the active site.

The protein belongs to the OMP decarboxylase family. Type 1 subfamily. Homodimer.

The enzyme catalyses orotidine 5'-phosphate + H(+) = UMP + CO2. Its pathway is pyrimidine metabolism; UMP biosynthesis via de novo pathway; UMP from orotate: step 2/2. In terms of biological role, catalyzes the decarboxylation of orotidine 5'-monophosphate (OMP) to uridine 5'-monophosphate (UMP). The protein is Orotidine 5'-phosphate decarboxylase of Idiomarina loihiensis (strain ATCC BAA-735 / DSM 15497 / L2-TR).